The primary structure comprises 284 residues: Diaminopimelate epimerase (284 aa).

Positions 21, 54, and 74 each coordinate substrate. Residue Cys83 is the Proton donor of the active site. Substrate-binding positions include 84–85 (GN), Asn167, Asn200, and 218–219 (ER). Cys227 acts as the Proton acceptor in catalysis. Residue 228–229 (GS) participates in substrate binding.

Belongs to the diaminopimelate epimerase family. Homodimer.

It localises to the cytoplasm. It carries out the reaction (2S,6S)-2,6-diaminopimelate = meso-2,6-diaminopimelate. It functions in the pathway amino-acid biosynthesis; L-lysine biosynthesis via DAP pathway; DL-2,6-diaminopimelate from LL-2,6-diaminopimelate: step 1/1. Catalyzes the stereoinversion of LL-2,6-diaminopimelate (L,L-DAP) to meso-diaminopimelate (meso-DAP), a precursor of L-lysine and an essential component of the bacterial peptidoglycan. The sequence is that of Diaminopimelate epimerase from Buchnera aphidicola subsp. Acyrthosiphon pisum (strain 5A).